The sequence spans 910 residues: Leucine--tRNA ligase (910 aa).

The 'HIGH' region signature appears at proline 42 to histidine 52. The 'KMSKS' region signature appears at threonine 658–serine 662. Lysine 661 is an ATP binding site.

It belongs to the class-I aminoacyl-tRNA synthetase family.

It is found in the cytoplasm. The enzyme catalyses tRNA(Leu) + L-leucine + ATP = L-leucyl-tRNA(Leu) + AMP + diphosphate. This is Leucine--tRNA ligase from Acidovorax sp. (strain JS42).